A 138-amino-acid polypeptide reads, in one-letter code: ATP synthase epsilon chain (138 aa).

This sequence belongs to the ATPase epsilon chain family. F-type ATPases have 2 components, CF(1) - the catalytic core - and CF(0) - the membrane proton channel. CF(1) has five subunits: alpha(3), beta(3), gamma(1), delta(1), epsilon(1). CF(0) has three main subunits: a, b and c.

The protein localises to the cell inner membrane. Its function is as follows. Produces ATP from ADP in the presence of a proton gradient across the membrane. This is ATP synthase epsilon chain from Wigglesworthia glossinidia brevipalpis.